Reading from the N-terminus, the 162-residue chain is MKCLLISLALWLGTVGTRGTEPELSETQRRSLQVALEEFHKHPPVQLAFQEIGVDRAEEVLFSAGTFVRLEFKLQQTNCPKKDWKKPECTIKPNGRRRKCLACIKMDPKGKILGRIVHCPILKQGPQDPQELQCIKIAQAGEDPHGYFLPGQFAFSRALRTK.

Positions 1–20 (MKCLLISLALWLGTVGTRGT) are cleaved as a signal peptide. 3 cysteine pairs are disulfide-bonded: Cys79–Cys89, Cys100–Cys119, and Cys103–Cys134. Residues 157-162 (RALRTK) constitute a propeptide that is removed on maturation.

Post-translationally, secreted in an inactive precursor form, prochemerin, which is proteolytically processed by a variety of extracellular proteases to generate forms with differing levels of bioactivity. For example, the removal of six amino acids results in chemerin-156, which exhibits the highest activity, while removal of seven amino acids results in chemerin-155 which has slightly less activity. Some proteases are able to cleave at more than one site and chemerin forms may be sequentially processed by different enzymes to modulate activity levels. The coordinated expression and activity of chemerin-modifying enzymes is essential for regulating its bioactivation, inactivation and, consequently, biological function. Cathepsin G cleaves seven C-terminal amino acids from prochemerin (chemerin-155), elastase is able to cleave six (chemerin-156), eight (chemerin-154) or eleven (chemerin-151), plasmin cleaves five amino acids (chemerin-157), and tryptase cleaves five (chemerin-157) or eight (chemerin-154). Multiple cleavages might be required to fully activate chemerin, with an initial tryptase cleavage resulting in chemerin with low activity (chemerin-157), and a second cleavage by carboxypeptidase N or B producing highly active chemerin (chemerin-156). In terms of tissue distribution, expressed in the differentiated adipocytes (at protein level). Abundantly expressed in the liver, adipose tissue including visceral, epididymal, and brown adipose tissue.

Its subcellular location is the secreted. Functionally, adipocyte-secreted protein (adipokine) that regulates adipogenesis, metabolism and inflammation through activation of the chemokine-like receptor 1 (CMKLR1). Also acts as a ligand for CMKLR2. Can also bind to C-C chemokine receptor-like 2 (CCRL2), but with a lower affinity than it does to CMKLR1 or CMKLR2. Positively regulates adipocyte differentiation, modulates the expression of adipocyte genes involved in lipid and glucose metabolism and might play a role in angiogenesis, a process essential for the expansion of white adipose tissue. Also acts as a pro-inflammatory adipokine, causing an increase in secretion of pro-inflammatory and prodiabetic adipokines, which further impair adipose tissue metabolic function and have negative systemic effects including impaired insulin sensitivity, altered glucose and lipid metabolism, and a decrease in vascular function in other tissues. Can have both pro- and anti-inflammatory properties depending on the modality of enzymatic cleavage by different classes of proteases. Acts as a chemotactic factor for leukocyte populations expressing CMKLR1, particularly immature plasmacytoid dendritic cells, but also immature myeloid DCs, macrophages and natural killer cells. Exerts an anti-inflammatory role by preventing TNF/TNFA-induced VCAM1 expression and monocytes adhesion in vascular endothelial cells. The effect is mediated via inhibiting activation of NF-kappa-B and CRK/p38 through stimulation of AKT1/NOS3 signaling and nitric oxide production. Exhibits an antimicrobial function in the skin. This is Retinoic acid receptor responder protein 2 (Rarres2) from Mus musculus (Mouse).